A 429-amino-acid chain; its full sequence is C4-dicarboxylate transport protein (429 aa).

The next 8 helical transmembrane spans lie at 3–23 (LTIF…GVLL), 44–64 (LIKM…IAGM), 76–96 (IALL…LLIV), 142–162 (IGAF…LFGF), 184–204 (VIFG…FGAM), 222–242 (LIAC…GSIA), 326–346 (VIHQ…AAGV), and 352–372 (IVLA…LALI).

It belongs to the dicarboxylate/amino acid:cation symporter (DAACS) (TC 2.A.23) family.

Its subcellular location is the cell inner membrane. Functionally, responsible for the transport of dicarboxylates such as succinate, fumarate, and malate from the periplasm across the membrane. The sequence is that of C4-dicarboxylate transport protein from Serratia proteamaculans (strain 568).